Reading from the N-terminus, the 175-residue chain is Large ribosomal subunit protein uL10 (175 aa).

It belongs to the universal ribosomal protein uL10 family. In terms of assembly, part of the ribosomal stalk of the 50S ribosomal subunit. The N-terminus interacts with L11 and the large rRNA to form the base of the stalk. The C-terminus forms an elongated spine to which L12 dimers bind in a sequential fashion forming a multimeric L10(L12)X complex.

In terms of biological role, forms part of the ribosomal stalk, playing a central role in the interaction of the ribosome with GTP-bound translation factors. The sequence is that of Large ribosomal subunit protein uL10 from Methylobacterium sp. (strain 4-46).